The chain runs to 383 residues: UDP-N-acetylglucosamine--N-acetylmuramyl-(pentapeptide) pyrophosphoryl-undecaprenol N-acetylglucosamine transferase (383 aa).

UDP-N-acetyl-alpha-D-glucosamine is bound by residues 11–13, Asn-125, Arg-166, Ser-191, Ile-246, and Gln-291; that span reads TGG. The segment at 364–383 is disordered; sequence PNGRERTPIEAEKKAPRSNS. Basic and acidic residues predominate over residues 366–383; the sequence is GRERTPIEAEKKAPRSNS.

This sequence belongs to the glycosyltransferase 28 family. MurG subfamily.

Its subcellular location is the cell inner membrane. The enzyme catalyses di-trans,octa-cis-undecaprenyl diphospho-N-acetyl-alpha-D-muramoyl-L-alanyl-D-glutamyl-meso-2,6-diaminopimeloyl-D-alanyl-D-alanine + UDP-N-acetyl-alpha-D-glucosamine = di-trans,octa-cis-undecaprenyl diphospho-[N-acetyl-alpha-D-glucosaminyl-(1-&gt;4)]-N-acetyl-alpha-D-muramoyl-L-alanyl-D-glutamyl-meso-2,6-diaminopimeloyl-D-alanyl-D-alanine + UDP + H(+). The protein operates within cell wall biogenesis; peptidoglycan biosynthesis. In terms of biological role, cell wall formation. Catalyzes the transfer of a GlcNAc subunit on undecaprenyl-pyrophosphoryl-MurNAc-pentapeptide (lipid intermediate I) to form undecaprenyl-pyrophosphoryl-MurNAc-(pentapeptide)GlcNAc (lipid intermediate II). The protein is UDP-N-acetylglucosamine--N-acetylmuramyl-(pentapeptide) pyrophosphoryl-undecaprenol N-acetylglucosamine transferase of Myxococcus xanthus (strain DK1622).